We begin with the raw amino-acid sequence, 102 residues long: 10 kDa heat shock protein, mitochondrial (102 aa).

N-acetylalanine is present on Ala2. At Lys8 the chain carries N6-acetyllysine. Residue Lys28 is modified to N6-succinyllysine. Lys40 carries the post-translational modification N6-acetyllysine; alternate. Lys40, Lys54, and Lys56 each carry N6-malonyllysine; alternate. N6-succinyllysine; alternate is present on residues Lys40, Lys54, and Lys56. Lys56 is modified (N6-acetyllysine; alternate). Position 57 is a phosphoserine (Ser57). 2 positions are modified to N6-acetyllysine; alternate: Lys66 and Lys70. 2 positions are modified to N6-succinyllysine; alternate: Lys66 and Lys70. Thr79 is subject to Phosphothreonine. 2 positions are modified to N6-acetyllysine; alternate: Lys80 and Lys86. An N6-succinyllysine; alternate mark is found at Lys80 and Lys86. Lys99 is subject to N6-acetyllysine.

It belongs to the GroES chaperonin family. Homoheptamer arranged in a ring structure. 2 heptameric Hsp10 rings interact with a Hsp60 tetradecamer in the structure of a back-to-back double heptameric ring to form the symmetrical football complex.

The protein resides in the mitochondrion matrix. Its function is as follows. Co-chaperonin implicated in mitochondrial protein import and macromolecular assembly. Together with Hsp60, facilitates the correct folding of imported proteins. May also prevent misfolding and promote the refolding and proper assembly of unfolded polypeptides generated under stress conditions in the mitochondrial matrix. The functional units of these chaperonins consist of heptameric rings of the large subunit Hsp60, which function as a back-to-back double ring. In a cyclic reaction, Hsp60 ring complexes bind one unfolded substrate protein per ring, followed by the binding of ATP and association with 2 heptameric rings of the co-chaperonin Hsp10. This leads to sequestration of the substrate protein in the inner cavity of Hsp60 where, for a certain period of time, it can fold undisturbed by other cell components. Synchronous hydrolysis of ATP in all Hsp60 subunits results in the dissociation of the chaperonin rings and the release of ADP and the folded substrate protein. In Mus musculus (Mouse), this protein is 10 kDa heat shock protein, mitochondrial (Hspe1).